A 355-amino-acid chain; its full sequence is Probable NADPH-dependent quinone reductase tdiC (355 aa).

Belongs to the zinc-containing alcohol dehydrogenase family. The cofactor is NADPH.

It participates in secondary metabolite biosynthesis. Functionally, probable NADPH-dependent quinone reductase; part of the gene cluster that mediates the biosynthesis of terrequinone A, an antitumor agent. The first step in the biosynthetic pathway for terrequinone A is formation of indole pyruvic acid (IPA) from L-tryptophan by the aminotransferase tdiD. The nonribosomal peptide synthase tdiA then immediately converts unstable IPA to didemethylasterriquinone D (DDAQ D), via condensation of 2 IPA molecules. The symmetric connectivity of the 2 IPA molecules is thought to arise by head-to-tail dual Claisen condensations facilitated by the TE domain. TdiB then catalyzes reverse prenylation by transferring dimethylallyl diphosphate to carbon atom 2' of DDAQ D, to yield asterriquinone C-1. Finally, tdiC and tdiE enzymes robustly convert asterriquinone C-1 to terrequinone A via a transformation involving regular prenylation at carbon atom 5, which requires elimination of the hydroxy group on C-5. This Emericella nidulans (strain FGSC A4 / ATCC 38163 / CBS 112.46 / NRRL 194 / M139) (Aspergillus nidulans) protein is Probable NADPH-dependent quinone reductase tdiC.